Consider the following 90-residue polypeptide: Small ribosomal subunit protein uS17 (90 aa).

Belongs to the universal ribosomal protein uS17 family. As to quaternary structure, part of the 30S ribosomal subunit.

Its function is as follows. One of the primary rRNA binding proteins, it binds specifically to the 5'-end of 16S ribosomal RNA. The sequence is that of Small ribosomal subunit protein uS17 from Burkholderia cenocepacia (strain ATCC BAA-245 / DSM 16553 / LMG 16656 / NCTC 13227 / J2315 / CF5610) (Burkholderia cepacia (strain J2315)).